Consider the following 337-residue polypeptide: Phosphate acyltransferase (337 aa).

This sequence belongs to the PlsX family. In terms of assembly, homodimer. Probably interacts with PlsY.

The protein localises to the cytoplasm. The enzyme catalyses a fatty acyl-[ACP] + phosphate = an acyl phosphate + holo-[ACP]. It participates in lipid metabolism; phospholipid metabolism. Its function is as follows. Catalyzes the reversible formation of acyl-phosphate (acyl-PO(4)) from acyl-[acyl-carrier-protein] (acyl-ACP). This enzyme utilizes acyl-ACP as fatty acyl donor, but not acyl-CoA. The sequence is that of Phosphate acyltransferase from Aromatoleum aromaticum (strain DSM 19018 / LMG 30748 / EbN1) (Azoarcus sp. (strain EbN1)).